Reading from the N-terminus, the 292-residue chain is Keratin-associated protein 10-9 (292 aa).

25 consecutive repeat copies span residues C26 to P30, C31 to S35, C36 to A40, C57 to T61, C79 to S83, C99 to V103, C104 to V108, C109 to V113, C114 to S118, C120 to S124, C130 to S134, C140 to V144, C145 to V149, C150 to T154, C162 to S166, C172 to S176, Y182 to V186, C187 to V191, C192 to I196, C197 to V201, C209 to S213, C219 to S223, C224 to S228, C243 to V247, and C250 to T254. The 25 X 5 AA repeats of C-C-X(3) stretch occupies residues C26–T254.

The protein belongs to the KRTAP type 10 family. In terms of assembly, interacts with hair keratins. Restricted to a narrow region of the hair fiber cuticle, lying approximately 20 cell layers above the apex of the dermal papilla of the hair root; not detected in any other tissues.

In terms of biological role, in the hair cortex, hair keratin intermediate filaments are embedded in an interfilamentous matrix, consisting of hair keratin-associated proteins (KRTAP), which are essential for the formation of a rigid and resistant hair shaft through their extensive disulfide bond cross-linking with abundant cysteine residues of hair keratins. The matrix proteins include the high-sulfur and high-glycine-tyrosine keratins. The chain is Keratin-associated protein 10-9 (KRTAP10-9) from Homo sapiens (Human).